We begin with the raw amino-acid sequence, 156 residues long: Transcription antitermination protein NusB (156 aa).

The protein belongs to the NusB family.

In terms of biological role, involved in transcription antitermination. Required for transcription of ribosomal RNA (rRNA) genes. Binds specifically to the boxA antiterminator sequence of the ribosomal RNA (rrn) operons. This chain is Transcription antitermination protein NusB, found in Rickettsia rickettsii (strain Iowa).